The primary structure comprises 191 residues: Potassium-transporting ATPase KdpC subunit (191 aa).

The chain crosses the membrane as a helical span at residues 6-26 (PALVLFILLTLLTGGVYPLLT).

The protein belongs to the KdpC family. In terms of assembly, the system is composed of three essential subunits: KdpA, KdpB and KdpC.

The protein localises to the cell inner membrane. In terms of biological role, part of the high-affinity ATP-driven potassium transport (or Kdp) system, which catalyzes the hydrolysis of ATP coupled with the electrogenic transport of potassium into the cytoplasm. This subunit acts as a catalytic chaperone that increases the ATP-binding affinity of the ATP-hydrolyzing subunit KdpB by the formation of a transient KdpB/KdpC/ATP ternary complex. The sequence is that of Potassium-transporting ATPase KdpC subunit from Klebsiella pneumoniae (strain 342).